A 588-amino-acid polypeptide reads, in one-letter code: Zinc finger protein 599 (588 aa).

The KRAB domain maps to 9-80; that stretch reads VSFEDVVVTF…KRGLSQSTCA (72 aa). C2H2-type zinc fingers lie at residues 199–221, 227–249, 255–277, 283–305, 311–333, 339–361, 367–389, 395–417, 423–445, 451–473, 479–501, 507–529, 535–557, and 563–585; these read YTCT…QQIH, YECN…MRLH, YKCI…QRIH, YECK…NMTH, FLCK…MRIH, YECG…NVTH, YECG…KRTH, FECK…MRIH, YECS…NRTH, LECK…MRIH, YVCR…NRIH, FECK…MRTH, and FECN…RKIH.

It belongs to the krueppel C2H2-type zinc-finger protein family.

Its subcellular location is the nucleus. Its function is as follows. May be involved in transcriptional regulation. This Homo sapiens (Human) protein is Zinc finger protein 599 (ZNF599).